Reading from the N-terminus, the 922-residue chain is Disintegrin and metalloproteinase domain-containing protein 10 homolog (922 aa).

The first 26 residues, 1–26 (MSSPIRNRLQLVVTLIFCLFFENVNG), serve as a signal peptide directing secretion. Residues 27 to 228 (LNNFIDNFET…YMTMGGRSKR (202 aa)) constitute a propeptide that is removed on maturation. Residues N74, N185, and N346 are each glycosylated (N-linked (GlcNAc...) asparagine). Over 229–745 (ANTLRDHDGL…ETLTQWAQDN (517 aa)) the chain is Extracellular. Residues 242 to 480 (RTCSLYMQAD…CSVKNISAVL (239 aa)) enclose the Peptidase M12B domain. Position 426 (H426) interacts with Zn(2+). E427 is an active-site residue. Zn(2+) contacts are provided by H430 and H436. C442 and C471 are joined by a disulfide. An N-linked (GlcNAc...) asparagine glycan is attached at N475. In terms of domain architecture, Disintegrin spans 511–615 (SAFCGNQIYE…QCPVSPPKHD (105 aa)). Disulfide bonds link C542–C577, C564–C572, C588–C607, C594–C626, and C619–C631. Residue N632 is glycosylated (N-linked (GlcNAc...) asparagine). 4 cysteine pairs are disulfide-bonded: C636/C659, C644/C665, C655/C707, and C700/C713. Residue N677 is glycosylated (N-linked (GlcNAc...) asparagine). Residues 746–766 (WWVVGVGGLVFLVIMALFVKC) traverse the membrane as a helical segment. Residues 767–922 (CAVHTPSTNP…SGNGGKKKGK (156 aa)) are Cytoplasmic-facing. 2 disordered regions span residues 797–837 (QHRQ…PSAP) and 864–922 (PGSS…KKGK). Low complexity predominate over residues 805 to 834 (AAGSVPPGPGAQPRSGAASAPSRTTPSARP).

As to quaternary structure, may interact with tetraspanin tsp-12; the interaction promotes sup-17 cell membrane localization. The cofactor is Zn(2+). In terms of tissue distribution, expressed in the germline.

Its subcellular location is the cell membrane. It localises to the basolateral cell membrane. It is found in the cytoplasmic vesicle membrane. The catalysed reaction is Endopeptidase of broad specificity.. Its function is as follows. Metalloprotease. Acts together with protease adm-4 and in a cell autonomous manner to facilitate lin-12/Notch signaling during developmental cell fate decision, including anchor cell/ventral uterine precursor cell decision and vulva precursor cell specification. By modulating glp-1/Notch signaling, plays a role in germline development. Probably by modulating BMP-like Sma/Mab signaling via the shedding of unc-40 ectodomain, involved in the regulation of body size and mesoderm development. Probably by shedding ephrin efn-4, regulates axon guidance of SDQL neuron during development. The protein is Disintegrin and metalloproteinase domain-containing protein 10 homolog of Caenorhabditis elegans.